The primary structure comprises 117 residues: Ig heavy chain V region 1-62-3 (117 aa).

Residues 1–19 (MGWSCIMLFLAATATGVHF) form the signal peptide. Positions 20 to 49 (QVQLQQPGAELVKPGASVKLSSKASGYTFT) are framework-1. The interval 50-54 (SYWMH) is complementarity-determining-1. The segment at 55-68 (WVKQRPGRGLEWIG) is framework-2. Positions 69-85 (RIDPNSGGTKYNEKFKS) are complementarity-determining-2. A framework-3 region spans residues 86–117 (KATLTVDKPSSTAYMQLSSLTSEDSAVYYCAR).

This Mus musculus (Mouse) protein is Ig heavy chain V region 1-62-3 (Ighv1-62-3).